We begin with the raw amino-acid sequence, 334 residues long: Spermidine synthase 1 (334 aa).

Basic and acidic residues predominate over residues 1 to 16; that stretch reads MDAKETSATDLKRPRE. The disordered stretch occupies residues 1-35; that stretch reads MDAKETSATDLKRPREEDDNGGAATMETENGDQKK. The 238-residue stretch at 45–282 folds into the PABS domain; sequence PGWFSEMSPM…GVIGFMLCST (238 aa). Residue glutamine 76 coordinates S-adenosyl 3-(methylsulfanyl)propylamine. Tyrosine 106 is a binding site for putrescine. S-adenosyl 3-(methylsulfanyl)propylamine contacts are provided by residues glutamine 107, aspartate 131, glutamate 151, 182–183, and aspartate 201; that span reads DG. Residue aspartate 201 is the Proton acceptor of the active site. Putrescine-binding positions include 201-204 and tyrosine 270; that span reads DSSD.

It belongs to the spermidine/spermine synthase family. As to quaternary structure, homotetramer and heterodimer. Component of a multiprotein complex. Interacts with SPMS and SPDSYN2.

It catalyses the reaction S-adenosyl 3-(methylsulfanyl)propylamine + putrescine = S-methyl-5'-thioadenosine + spermidine + H(+). It functions in the pathway amine and polyamine biosynthesis; spermidine biosynthesis; spermidine from putrescine: step 1/1. This Arabidopsis thaliana (Mouse-ear cress) protein is Spermidine synthase 1 (SPDSYN1).